The following is a 449-amino-acid chain: Na(+)-translocating NADH-quinone reductase subunit A (449 aa).

It belongs to the NqrA family. As to quaternary structure, composed of six subunits; NqrA, NqrB, NqrC, NqrD, NqrE and NqrF.

It carries out the reaction a ubiquinone + n Na(+)(in) + NADH + H(+) = a ubiquinol + n Na(+)(out) + NAD(+). Functionally, NQR complex catalyzes the reduction of ubiquinone-1 to ubiquinol by two successive reactions, coupled with the transport of Na(+) ions from the cytoplasm to the periplasm. NqrA to NqrE are probably involved in the second step, the conversion of ubisemiquinone to ubiquinol. This chain is Na(+)-translocating NADH-quinone reductase subunit A, found in Serratia proteamaculans (strain 568).